Here is a 327-residue protein sequence, read N- to C-terminus: Methionyl-tRNA formyltransferase (327 aa).

122 to 125 serves as a coordination point for (6S)-5,6,7,8-tetrahydrofolate; it reads SLLP.

It belongs to the Fmt family.

The enzyme catalyses L-methionyl-tRNA(fMet) + (6R)-10-formyltetrahydrofolate = N-formyl-L-methionyl-tRNA(fMet) + (6S)-5,6,7,8-tetrahydrofolate + H(+). Functionally, attaches a formyl group to the free amino group of methionyl-tRNA(fMet). The formyl group appears to play a dual role in the initiator identity of N-formylmethionyl-tRNA by promoting its recognition by IF2 and preventing the misappropriation of this tRNA by the elongation apparatus. This chain is Methionyl-tRNA formyltransferase, found in Ralstonia nicotianae (strain ATCC BAA-1114 / GMI1000) (Ralstonia solanacearum).